The chain runs to 145 residues: Transcription factor MEE8 (145 aa).

Over residues 33–49 the composition is skewed to basic and acidic residues; it reads EKGVEKVGQKRSAESRR. The interval 33-61 is disordered; it reads EKGVEKVGQKRSAESRREGKKKRVKTQCV. A bHLH domain is found at 66-115; sequence DKSDHDTLLKKKRRERIRRQLETLKEITPNCPQSDINAILDCVIEYTNNL.

Homodimer.

The protein localises to the nucleus. Its function is as follows. Required during early embryo development, for the endosperm formation. The chain is Transcription factor MEE8 (MEE8) from Arabidopsis thaliana (Mouse-ear cress).